Here is a 95-residue protein sequence, read N- to C-terminus: MKKYEIMYILRPNLDNKYVKKINDTLQNVFLQAPNQILEQKEIGLKDLTYFIDNHKKGYYNWLMVKADNDAVLEFNRIVKITEEIIRFIVIKDKE.

It belongs to the bacterial ribosomal protein bS6 family.

In terms of biological role, binds together with bS18 to 16S ribosomal RNA. The protein is Small ribosomal subunit protein bS6 of Aster yellows witches'-broom phytoplasma (strain AYWB).